The sequence spans 418 residues: S-adenosylmethionine synthase (418 aa).

His-16 provides a ligand contact to ATP. Asp-18 contributes to the Mg(2+) binding site. Glu-44 is a binding site for K(+). Residues Glu-57 and Gln-100 each contribute to the L-methionine site. Residues Gln-100–Ser-110 form a flexible loop region. ATP is bound by residues Asp-174 to Lys-176, Asp-259, Arg-265 to Lys-266, Ala-282, and Lys-286. Residue Asp-259 coordinates L-methionine. Lys-290 is a binding site for L-methionine.

Belongs to the AdoMet synthase family. In terms of assembly, homotetramer; dimer of dimers. Mg(2+) is required as a cofactor. K(+) serves as cofactor.

Its subcellular location is the cytoplasm. The catalysed reaction is L-methionine + ATP + H2O = S-adenosyl-L-methionine + phosphate + diphosphate. It functions in the pathway amino-acid biosynthesis; S-adenosyl-L-methionine biosynthesis; S-adenosyl-L-methionine from L-methionine: step 1/1. Its function is as follows. Catalyzes the formation of S-adenosylmethionine (AdoMet) from methionine and ATP. The overall synthetic reaction is composed of two sequential steps, AdoMet formation and the subsequent tripolyphosphate hydrolysis which occurs prior to release of AdoMet from the enzyme. The sequence is that of S-adenosylmethionine synthase from Acaryochloris marina (strain MBIC 11017).